The following is a 109-amino-acid chain: Large ribosomal subunit protein uL24 (109 aa).

The protein belongs to the universal ribosomal protein uL24 family. As to quaternary structure, part of the 50S ribosomal subunit.

In terms of biological role, one of two assembly initiator proteins, it binds directly to the 5'-end of the 23S rRNA, where it nucleates assembly of the 50S subunit. One of the proteins that surrounds the polypeptide exit tunnel on the outside of the subunit. The sequence is that of Large ribosomal subunit protein uL24 from Rickettsia akari (strain Hartford).